A 62-amino-acid polypeptide reads, in one-letter code: Photosystem II reaction center protein Z (62 aa).

Helical transmembrane passes span 8 to 28 and 41 to 61; these read AVFALIATSSVLVISVPLVFA and FSGTSLWIGLVFLVAILNSLI.

This sequence belongs to the PsbZ family. PSII is composed of 1 copy each of membrane proteins PsbA, PsbB, PsbC, PsbD, PsbE, PsbF, PsbH, PsbI, PsbJ, PsbK, PsbL, PsbM, PsbT, PsbY, PsbZ, Psb30/Ycf12, at least 3 peripheral proteins of the oxygen-evolving complex and a large number of cofactors. It forms dimeric complexes.

It is found in the plastid. It localises to the chloroplast thylakoid membrane. In terms of biological role, may control the interaction of photosystem II (PSII) cores with the light-harvesting antenna, regulates electron flow through the 2 photosystem reaction centers. PSII is a light-driven water plastoquinone oxidoreductase, using light energy to abstract electrons from H(2)O, generating a proton gradient subsequently used for ATP formation. The sequence is that of Photosystem II reaction center protein Z from Hordeum vulgare (Barley).